Reading from the N-terminus, the 163-residue chain is Transmembrane protein 278 (163 aa).

The disordered stretch occupies residues 1-37 (MSEQGRETEEEEGGGGASDTAPMLPRGPPDHQASALT). 2 consecutive transmembrane segments (helical) span residues 51–71 (LLAG…LVLL) and 105–125 (AALI…ASAV). Over residues 136 to 148 (LLPPPAGTPGPRR) the composition is skewed to pro residues. The segment at 136 to 156 (LLPPPAGTPGPRRPPGRPDED) is disordered.

Belongs to the TMEM88 family.

The protein resides in the membrane. The protein is Transmembrane protein 278 of Homo sapiens (Human).